The primary structure comprises 505 residues: ATP synthase subunit beta (505 aa).

158–165 (GGAGVGKT) contacts ATP.

This sequence belongs to the ATPase alpha/beta chains family. As to quaternary structure, F-type ATPases have 2 components, CF(1) - the catalytic core - and CF(0) - the membrane proton channel. CF(1) has five subunits: alpha(3), beta(3), gamma(1), delta(1), epsilon(1). CF(0) has three main subunits: a(1), b(2) and c(9-12). The alpha and beta chains form an alternating ring which encloses part of the gamma chain. CF(1) is attached to CF(0) by a central stalk formed by the gamma and epsilon chains, while a peripheral stalk is formed by the delta and b chains.

The protein localises to the cell inner membrane. The catalysed reaction is ATP + H2O + 4 H(+)(in) = ADP + phosphate + 5 H(+)(out). In terms of biological role, produces ATP from ADP in the presence of a proton gradient across the membrane. The catalytic sites are hosted primarily by the beta subunits. This is ATP synthase subunit beta from Parabacteroides distasonis (strain ATCC 8503 / DSM 20701 / CIP 104284 / JCM 5825 / NCTC 11152).